A 336-amino-acid polypeptide reads, in one-letter code: Dihydroorotate dehydrogenase (quinone) (336 aa).

FMN is bound by residues 62–66 (AGLDK) and T86. Position 66 (K66) interacts with substrate. 111 to 115 (NRMGF) is a binding site for substrate. The FMN site is built by N139 and N172. N172 is a binding site for substrate. S175 acts as the Nucleophile in catalysis. N177 is a substrate binding site. Positions 217 and 245 each coordinate FMN. A substrate-binding site is contributed by 246 to 247 (NT). FMN is bound by residues G268, G297, and 318-319 (YS).

The protein belongs to the dihydroorotate dehydrogenase family. Type 2 subfamily. As to quaternary structure, monomer. Requires FMN as cofactor.

The protein localises to the cell membrane. The catalysed reaction is (S)-dihydroorotate + a quinone = orotate + a quinol. It participates in pyrimidine metabolism; UMP biosynthesis via de novo pathway; orotate from (S)-dihydroorotate (quinone route): step 1/1. Catalyzes the conversion of dihydroorotate to orotate with quinone as electron acceptor. The protein is Dihydroorotate dehydrogenase (quinone) of Aeromonas salmonicida (strain A449).